Here is a 265-residue protein sequence, read N- to C-terminus: Cytochrome c oxidase subunit 3 (265 aa).

6 helical membrane-spanning segments follow: residues 16–36 (PWPISGSLGALATTVGGVMYM), 41–61 (GGATLLSLGLIFILYTMFVWW), 81–101 (GPRYGFILFIVSEVMFLFALF), 162–182 (AVYALVATVSLALVFTAFQGM), 200–220 (FFLATGFHGFHVIIGTLFSIV), and 245–265 (WHFVDVVRLFPFVSIYWWGGI).

Belongs to the cytochrome c oxidase subunit 3 family. Component of the cytochrome c oxidase (complex IV, CIV), a multisubunit enzyme composed of a catalytic core of 3 subunits and several supernumerary subunits. The complex exists as a monomer or a dimer and forms supercomplexes (SCs) in the inner mitochondrial membrane with ubiquinol-cytochrome c oxidoreductase (cytochrome b-c1 complex, complex III, CIII).

The protein resides in the mitochondrion inner membrane. It carries out the reaction 4 Fe(II)-[cytochrome c] + O2 + 8 H(+)(in) = 4 Fe(III)-[cytochrome c] + 2 H2O + 4 H(+)(out). In terms of biological role, component of the cytochrome c oxidase, the last enzyme in the mitochondrial electron transport chain which drives oxidative phosphorylation. The respiratory chain contains 3 multisubunit complexes succinate dehydrogenase (complex II, CII), ubiquinol-cytochrome c oxidoreductase (cytochrome b-c1 complex, complex III, CIII) and cytochrome c oxidase (complex IV, CIV), that cooperate to transfer electrons derived from NADH and succinate to molecular oxygen, creating an electrochemical gradient over the inner membrane that drives transmembrane transport and the ATP synthase. Cytochrome c oxidase is the component of the respiratory chain that catalyzes the reduction of oxygen to water. Electrons originating from reduced cytochrome c in the intermembrane space (IMS) are transferred via the dinuclear copper A center (CU(A)) of subunit 2 and heme A of subunit 1 to the active site in subunit 1, a binuclear center (BNC) formed by heme A3 and copper B (CU(B)). The BNC reduces molecular oxygen to 2 water molecules using 4 electrons from cytochrome c in the IMS and 4 protons from the mitochondrial matrix. The polypeptide is Cytochrome c oxidase subunit 3 (COX3) (Helianthus annuus (Common sunflower)).